Consider the following 325-residue polypeptide: Glycerol-3-phosphate dehydrogenase [NAD(P)+] (325 aa).

Residues S14, F15, R35, and K109 each coordinate NADPH. Sn-glycerol 3-phosphate contacts are provided by K109 and G137. A141 contributes to the NADPH binding site. Positions 192, 247, 257, 258, and 259 each coordinate sn-glycerol 3-phosphate. K192 (proton acceptor) is an active-site residue. R258 lines the NADPH pocket. Residues L282 and E284 each coordinate NADPH.

It belongs to the NAD-dependent glycerol-3-phosphate dehydrogenase family.

It localises to the cytoplasm. It catalyses the reaction sn-glycerol 3-phosphate + NAD(+) = dihydroxyacetone phosphate + NADH + H(+). The catalysed reaction is sn-glycerol 3-phosphate + NADP(+) = dihydroxyacetone phosphate + NADPH + H(+). It functions in the pathway membrane lipid metabolism; glycerophospholipid metabolism. Catalyzes the reduction of the glycolytic intermediate dihydroxyacetone phosphate (DHAP) to sn-glycerol 3-phosphate (G3P), the key precursor for phospholipid synthesis. This is Glycerol-3-phosphate dehydrogenase [NAD(P)+] from Rickettsia conorii (strain ATCC VR-613 / Malish 7).